The following is a 139-amino-acid chain: MSYCRQEGKDKIIFVTKEDHETPSSAELIADDPNDPYEDHGLILPNGDINWNCPCLGGMASGPCGEQFKSAFSCFHYSQEEIKGSDCLDQFRAMQECMQKYPDIYPQEDDEDEAEKEKQNKEAEAFSTETSDTKEESSS.

3 cysteine pairs are disulfide-bonded: C53–C55, C64–C97, and C74–C87. In terms of domain architecture, CHCH spans S61–Y105. Short sequence motifs (cx9C motif) lie at residues C64–C74 and C87–C97. A disordered region spans residues P102 to S139. Over residues E115–E124 the composition is skewed to basic and acidic residues.

As to quaternary structure, monomer. Can form homooligomers.

It is found in the mitochondrion intermembrane space. Functionally, central component of a redox-sensitive mitochondrial intermembrane space import machinery which is required for the biogenesis of respiratory chain complexes. Functions as chaperone and catalyzes the formation of disulfide bonds in substrate proteins, such as COX17 or MICU1. Required for the import and folding of small cysteine-containing proteins (small Tim) in the mitochondrial intermembrane space (IMS). Precursor proteins to be imported into the IMS are translocated in their reduced form into the mitochondria. This Xenopus tropicalis (Western clawed frog) protein is Mitochondrial intermembrane space import and assembly protein 40 (chchd4).